The chain runs to 110 residues: uncharacterized protein (110 aa).

It to M.jannaschii MJ1213 and A.aeolicus AA15.

This is an uncharacterized protein from Methanocaldococcus jannaschii (strain ATCC 43067 / DSM 2661 / JAL-1 / JCM 10045 / NBRC 100440) (Methanococcus jannaschii).